The sequence spans 20 residues: Cytolysin tenebrosin-A (20 aa).

Residues 3-12 (AVAGAVIEGA) are plays an important role in the hemolytic activity. The interval 11–20 (GATLTFEVLQ) is N-terminal region.

It belongs to the actinoporin family. Sea anemone subfamily. Octamer or nonamer in membranes. Monomer in the soluble state.

The protein resides in the secreted. Its subcellular location is the nematocyst. The protein localises to the target cell membrane. In terms of biological role, pore-forming protein that forms cations-selective hydrophilic pores of around 1 nm and causes cardiac stimulation and cytolysis. Pore formation is a multi-step process that involves specific recognition of membrane sphingomyelin (but neither cholesterol nor phosphatidylcholine) using aromatic rich region and adjacent phosphocholine (POC) binding site, firm binding to the membrane (mainly driven by hydrophobic interactions) accompanied by the transfer of the N-terminal region to the lipid-water interface and finally pore formation after oligomerization of monomers. This is Cytolysin tenebrosin-A from Actinia tenebrosa (Australian red waratah sea anemone).